The chain runs to 76 residues: Omega/kappa-hexatoxin-Ar1g (76 aa).

The N-terminal stretch at 1–22 is a signal peptide; it reads MNTATGFIVLLVLATVLGGIEA. Positions 23–35 are excised as a propeptide; sequence GESHMRKDAMGRV. Disulfide bonds link Cys-40/Cys-55, Cys-47/Cys-60, and Cys-54/Cys-74.

The protein belongs to the neurotoxin 08 (Shiva) family. 02 (omega/kappa toxin) subfamily. As to expression, expressed by the venom gland.

Its subcellular location is the secreted. Its function is as follows. Toxin that may inhibit ion channels. The polypeptide is Omega/kappa-hexatoxin-Ar1g (Atrax robustus (Sydney funnel-web spider)).